A 396-amino-acid chain; its full sequence is NADH-quinone oxidoreductase subunit D (396 aa).

This sequence belongs to the complex I 49 kDa subunit family. NDH-1 is composed of 14 different subunits. Subunits NuoB, C, D, E, F, and G constitute the peripheral sector of the complex.

Its subcellular location is the cell inner membrane. It catalyses the reaction a quinone + NADH + 5 H(+)(in) = a quinol + NAD(+) + 4 H(+)(out). Its function is as follows. NDH-1 shuttles electrons from NADH, via FMN and iron-sulfur (Fe-S) centers, to quinones in the respiratory chain. The immediate electron acceptor for the enzyme in this species is believed to be ubiquinone. Couples the redox reaction to proton translocation (for every two electrons transferred, four hydrogen ions are translocated across the cytoplasmic membrane), and thus conserves the redox energy in a proton gradient. The polypeptide is NADH-quinone oxidoreductase subunit D (Brucella melitensis biotype 1 (strain ATCC 23456 / CCUG 17765 / NCTC 10094 / 16M)).